The chain runs to 220 residues: N-(5'-phosphoribosyl)anthranilate isomerase (220 aa).

The protein belongs to the TrpF family.

The enzyme catalyses N-(5-phospho-beta-D-ribosyl)anthranilate = 1-(2-carboxyphenylamino)-1-deoxy-D-ribulose 5-phosphate. It functions in the pathway amino-acid biosynthesis; L-tryptophan biosynthesis; L-tryptophan from chorismate: step 3/5. This Xylella fastidiosa (strain M23) protein is N-(5'-phosphoribosyl)anthranilate isomerase.